The chain runs to 254 residues: Probable transcriptional regulatory protein Saro_0419 (254 aa).

A compositionally biased stretch (basic residues) spans 1 to 14 (MAGHSKFKNIMHRK). The segment at 1 to 22 (MAGHSKFKNIMHRKGAQDKKRS) is disordered.

It belongs to the TACO1 family.

The protein resides in the cytoplasm. This chain is Probable transcriptional regulatory protein Saro_0419, found in Novosphingobium aromaticivorans (strain ATCC 700278 / DSM 12444 / CCUG 56034 / CIP 105152 / NBRC 16084 / F199).